Reading from the N-terminus, the 232-residue chain is dTTP/UTP pyrophosphatase (232 aa).

Asp103 (proton acceptor) is an active-site residue.

It belongs to the Maf family. YhdE subfamily. The cofactor is a divalent metal cation.

The protein localises to the cytoplasm. It catalyses the reaction dTTP + H2O = dTMP + diphosphate + H(+). It carries out the reaction UTP + H2O = UMP + diphosphate + H(+). The catalysed reaction is 5-methyl-UTP + H2O = 5-methyl-UMP + diphosphate + H(+). The enzyme catalyses psi-UTP + H2O = psi-UMP + diphosphate + H(+). Its function is as follows. Nucleoside triphosphate pyrophosphatase that hydrolyzes dTTP and UTP. Can also hydrolyze the modified nucleotides 5-methyl-UTP (m(5)UTP) and pseudo-UTP. Has weak activity with CTP. May have a dual role in cell division arrest and in preventing the incorporation of modified nucleotides into cellular nucleic acids. The protein is dTTP/UTP pyrophosphatase of Saccharomyces cerevisiae (strain ATCC 204508 / S288c) (Baker's yeast).